The sequence spans 389 residues: PqqA peptide cyclase (389 aa).

One can recognise a Radical SAM core domain in the interval 19–235 (VGLPLWLLAE…NEYRVRLEAE (217 aa)). Residues C33, C37, and C40 each coordinate [4Fe-4S] cluster.

The protein belongs to the radical SAM superfamily. PqqE family. As to quaternary structure, interacts with PqqD. The interaction is necessary for activity of PqqE. [4Fe-4S] cluster serves as cofactor.

The catalysed reaction is [PQQ precursor protein] + S-adenosyl-L-methionine = E-Y cross-linked-[PQQ precursor protein] + 5'-deoxyadenosine + L-methionine + H(+). Its pathway is cofactor biosynthesis; pyrroloquinoline quinone biosynthesis. Catalyzes the cross-linking of a glutamate residue and a tyrosine residue in the PqqA protein as part of the biosynthesis of pyrroloquinoline quinone (PQQ). The chain is PqqA peptide cyclase from Pseudomonas savastanoi pv. phaseolicola (strain 1448A / Race 6) (Pseudomonas syringae pv. phaseolicola (strain 1448A / Race 6)).